We begin with the raw amino-acid sequence, 287 residues long: 2-dehydro-3-deoxyphosphooctonate aldolase (287 aa).

This sequence belongs to the KdsA family.

It is found in the cytoplasm. It catalyses the reaction D-arabinose 5-phosphate + phosphoenolpyruvate + H2O = 3-deoxy-alpha-D-manno-2-octulosonate-8-phosphate + phosphate. Its pathway is carbohydrate biosynthesis; 3-deoxy-D-manno-octulosonate biosynthesis; 3-deoxy-D-manno-octulosonate from D-ribulose 5-phosphate: step 2/3. It participates in bacterial outer membrane biogenesis; lipopolysaccharide biosynthesis. In Rhodopseudomonas palustris (strain BisB5), this protein is 2-dehydro-3-deoxyphosphooctonate aldolase.